A 237-amino-acid polypeptide reads, in one-letter code: Lycopene beta-cyclase (237 aa).

7 helical membrane-spanning segments follow: residues 3–23 (TSYL…LGVV), 38–58 (VGIL…YLIA), 80–100 (EYLF…ALPL), 113–133 (AVLG…LLTV), 137–157 (FYIG…WAVG), 170–192 (AAVL…DGIW), and 213–233 (AFFF…AWVL).

It belongs to the lycopene beta-cyclase family.

It localises to the cell membrane. The catalysed reaction is a carotenoid psi-end group = a carotenoid beta-end derivative. The enzyme catalyses all-trans-lycopene = gamma-carotene. It catalyses the reaction gamma-carotene = all-trans-beta-carotene. It functions in the pathway carotenoid biosynthesis; beta-carotene biosynthesis. Functionally, catalyzes the cyclization of both ends of lycopene to form beta-carotene, a retinal precursor. Is required for bacteriorhodopsin biogenesis, a light-driven proton pump with a covalently bound retinal cofactor. The chain is Lycopene beta-cyclase from Halobacterium salinarum (strain ATCC 29341 / DSM 671 / R1).